The primary structure comprises 863 residues: MLFSPTLSSPLTPSAVKIERENLKQFELENFSRYSIFELIENRCDFYDALLIQLWQEIELSEQLGIALIAVGGYGRREMFPLSDLDFLILVEQTPSPEIEEKITQFIQFLWDCGFEVGNSVRTLEQCESEGKQDITIATNLLEARFLAGNRPHFDALNELVKRADFWSKEDFFNAKVQEQIERYQRYHNTAYNLEPDIKYSPGGLRDLHLLYWVALRHSGALTLEAILQSGFIYPQEYQQLQESRAFLFKVRFALHLILKRYDNRLLFDRQIKVSELLGFRGEGNPAVEKMMKCFFQALHRISLISNLLIQHYRENVLPSNQDTVIDQLDDDFQLINQCLCLRNSFVFQEKPARILDLFFYLTQYEHANIHSDTLRQLQISLDQLSQKLCEIPAAREKFLRLFNQPNAIKRAFMPMHQYGVLTAYLPQWQAIEGLMQFDLFHIYTVDEHTLRVMLKLESFLSQESAQEHPIAHRIFSQLSDRTLLYIAALFHDIAKGRGGDHAELGAVDIADFAQLHGLDRREIDTLAWLVKSHLLMSITAQRRDIHDPEVVMNFAEAVQNQVRLDYLTCLTVADICATNGNLWNSWKRSLFASLYEFTGRQFSQGMKELLDYSEKSAENRKLAQQILMRDYSDITPISIEQLWARCPEDYFVRNTPKQIAWHTSLLVDFVEALLVKISNRFSLGGTEVFIYCQDQPHLFNKVVSTIGAKKFSIHDAQIITTQDGYVFDSFIITELNGELVEFDRRRELEQALTLALQSEKLPALSIVPNRQLQHFTVQTDVRFLQENKKEHTQMELVALDKAGLLAQVSQIFTELNLNLLNAKITTVGEKAEDFFILTNQFGQALDSQQREILRNVLYRNIG.

Residues 1 to 328 form a uridylyltransferase region; it reads MLFSPTLSSP…PSNQDTVIDQ (328 aa). The segment at 329–687 is uridylyl-removing; it reads LDDDFQLINQ…ISNRFSLGGT (359 aa). The region spanning 446-568 is the HD domain; the sequence is VDEHTLRVML…VQNQVRLDYL (123 aa). ACT domains are found at residues 688-772 and 794-863; these read EVFI…PNRQ and QMEL…RNIG.

Belongs to the GlnD family. It depends on Mg(2+) as a cofactor.

It catalyses the reaction [protein-PII]-L-tyrosine + UTP = [protein-PII]-uridylyl-L-tyrosine + diphosphate. The catalysed reaction is [protein-PII]-uridylyl-L-tyrosine + H2O = [protein-PII]-L-tyrosine + UMP + H(+). With respect to regulation, uridylyltransferase (UTase) activity is inhibited by glutamine, while glutamine activates uridylyl-removing (UR) activity. Functionally, modifies, by uridylylation and deuridylylation, the PII regulatory proteins (GlnB and homologs), in response to the nitrogen status of the cell that GlnD senses through the glutamine level. Under low glutamine levels, catalyzes the conversion of the PII proteins and UTP to PII-UMP and PPi, while under higher glutamine levels, GlnD hydrolyzes PII-UMP to PII and UMP (deuridylylation). Thus, controls uridylylation state and activity of the PII proteins, and plays an important role in the regulation of nitrogen assimilation and metabolism. The polypeptide is Bifunctional uridylyltransferase/uridylyl-removing enzyme (Haemophilus influenzae (strain 86-028NP)).